The following is a 208-amino-acid chain: Uracil phosphoribosyltransferase (208 aa).

Residues Arg78, Arg103, and 130-138 contribute to the 5-phospho-alpha-D-ribose 1-diphosphate site; that span reads DPMLATGGS. Uracil contacts are provided by residues Ile193 and 198 to 200; that span reads GDA. 5-phospho-alpha-D-ribose 1-diphosphate is bound at residue Asp199.

It belongs to the UPRTase family. Mg(2+) serves as cofactor.

It carries out the reaction UMP + diphosphate = 5-phospho-alpha-D-ribose 1-diphosphate + uracil. It functions in the pathway pyrimidine metabolism; UMP biosynthesis via salvage pathway; UMP from uracil: step 1/1. Allosterically activated by GTP. In terms of biological role, catalyzes the conversion of uracil and 5-phospho-alpha-D-ribose 1-diphosphate (PRPP) to UMP and diphosphate. This Shewanella halifaxensis (strain HAW-EB4) protein is Uracil phosphoribosyltransferase.